The chain runs to 258 residues: 5'-nucleotidase SurE (258 aa).

Positions 18, 19, 49, and 102 each coordinate a divalent metal cation.

This sequence belongs to the SurE nucleotidase family. The cofactor is a divalent metal cation.

It localises to the cytoplasm. It carries out the reaction a ribonucleoside 5'-phosphate + H2O = a ribonucleoside + phosphate. Functionally, nucleotidase that shows phosphatase activity on nucleoside 5'-monophosphates. This Vibrio parahaemolyticus serotype O3:K6 (strain RIMD 2210633) protein is 5'-nucleotidase SurE.